Consider the following 395-residue polypeptide: S-adenosylmethionine synthase (395 aa).

Glu10 is a Mg(2+) binding site. His16 contacts ATP. Glu44 provides a ligand contact to K(+). Residues Glu57 and Gln100 each coordinate L-methionine. Residues 168–170, 236–239, 253–254, Ala270, Lys274, and Lys278 contribute to the ATP site; these read DGK, SGRF, and RK. Lys278 is a binding site for L-methionine.

This sequence belongs to the AdoMet synthase family. Homotetramer. The cofactor is Mn(2+). It depends on Mg(2+) as a cofactor. Co(2+) serves as cofactor. K(+) is required as a cofactor.

Its subcellular location is the cytoplasm. It catalyses the reaction L-methionine + ATP + H2O = S-adenosyl-L-methionine + phosphate + diphosphate. It participates in amino-acid biosynthesis; S-adenosyl-L-methionine biosynthesis; S-adenosyl-L-methionine from L-methionine: step 1/1. Catalyzes the formation of S-adenosylmethionine from methionine and ATP. The reaction comprises two steps that are both catalyzed by the same enzyme: formation of S-adenosylmethionine (AdoMet) and triphosphate, and subsequent hydrolysis of the triphosphate. The protein is S-adenosylmethionine synthase (METK) of Populus deltoides (Eastern poplar).